Here is a 210-residue protein sequence, read N- to C-terminus: Large ribosomal subunit protein uL3 (210 aa).

The segment at 131–165 (GPMSHGSKYHRRVGSMGATTDPGRTFKGKKMPGRM) is disordered.

The protein belongs to the universal ribosomal protein uL3 family. As to quaternary structure, part of the 50S ribosomal subunit. Forms a cluster with proteins L14 and L19.

Its function is as follows. One of the primary rRNA binding proteins, it binds directly near the 3'-end of the 23S rRNA, where it nucleates assembly of the 50S subunit. The polypeptide is Large ribosomal subunit protein uL3 (Caldanaerobacter subterraneus subsp. tengcongensis (strain DSM 15242 / JCM 11007 / NBRC 100824 / MB4) (Thermoanaerobacter tengcongensis)).